A 374-amino-acid chain; its full sequence is Guanine nucleotide-binding protein subunit alpha-15 (374 aa).

The 334-residue stretch at 41–374 (GELKLLLLGP…ARYLDEINLL (334 aa)) folds into the G-alpha domain. The segment at 44–57 (KLLLLGPGESGKST) is G1 motif. Residues 49–56 (GPGESGKS), 183–189 (LRSRMPT), 208–212 (DAGGQ), 277–280 (NKTD), and A346 contribute to the GTP site. Residues S56 and T189 each coordinate Mg(2+). The tract at residues 181 to 189 (DVLRSRMPT) is G2 motif. A G3 motif region spans residues 204-213 (LRIVDAGGQK). The segment at 273-280 (ILFLNKTD) is G4 motif. The tract at residues 344–349 (TCATDT) is G5 motif.

It belongs to the G-alpha family. G(q) subfamily. G proteins are composed of 3 units; alpha, beta and gamma. The alpha chain contains the guanine nucleotide binding site.

Its function is as follows. Guanine nucleotide-binding proteins (G proteins) are involved as modulators or transducers in various transmembrane signaling systems. The protein is Guanine nucleotide-binding protein subunit alpha-15 (Gna15) of Rattus norvegicus (Rat).